The chain runs to 257 residues: Triosephosphate isomerase (257 aa).

Substrate-binding residues include N12 and K14. Catalysis depends on H98, which acts as the Electrophile. E169 functions as the Proton acceptor in the catalytic mechanism.

It belongs to the triosephosphate isomerase family. As to quaternary structure, homodimer.

The enzyme catalyses D-glyceraldehyde 3-phosphate = dihydroxyacetone phosphate. The protein operates within carbohydrate biosynthesis; gluconeogenesis. It participates in carbohydrate degradation; glycolysis; D-glyceraldehyde 3-phosphate from glycerone phosphate: step 1/1. The sequence is that of Triosephosphate isomerase (tpiA) from Dictyostelium discoideum (Social amoeba).